The primary structure comprises 761 residues: Phosphoribosylformylglycinamidine synthase subunit PurL (761 aa).

Residues 1–16 (MTGNPAAPAATSVSPP) are compositionally biased toward low complexity. Positions 1–21 (MTGNPAAPAATSVSPPAEQPY) are disordered. Histidine 57 is a catalytic residue. The ATP site is built by tyrosine 60 and lysine 101. Glutamate 103 is a binding site for Mg(2+). Substrate-binding positions include 104-107 (SHNH) and arginine 126. Histidine 105 functions as the Proton acceptor in the catalytic mechanism. Mg(2+) is bound at residue aspartate 127. Position 252 (glutamine 252) interacts with substrate. Aspartate 280 is a binding site for Mg(2+). Substrate is bound at residue 329-331 (ESQ). Asparagine 519 and glycine 556 together coordinate ATP. Mg(2+) is bound at residue asparagine 557. Serine 559 contributes to the substrate binding site.

Belongs to the FGAMS family. In terms of assembly, monomer. Part of the FGAM synthase complex composed of 1 PurL, 1 PurQ and 2 PurS subunits.

It is found in the cytoplasm. It catalyses the reaction N(2)-formyl-N(1)-(5-phospho-beta-D-ribosyl)glycinamide + L-glutamine + ATP + H2O = 2-formamido-N(1)-(5-O-phospho-beta-D-ribosyl)acetamidine + L-glutamate + ADP + phosphate + H(+). The protein operates within purine metabolism; IMP biosynthesis via de novo pathway; 5-amino-1-(5-phospho-D-ribosyl)imidazole from N(2)-formyl-N(1)-(5-phospho-D-ribosyl)glycinamide: step 1/2. In terms of biological role, part of the phosphoribosylformylglycinamidine synthase complex involved in the purines biosynthetic pathway. Catalyzes the ATP-dependent conversion of formylglycinamide ribonucleotide (FGAR) and glutamine to yield formylglycinamidine ribonucleotide (FGAM) and glutamate. The FGAM synthase complex is composed of three subunits. PurQ produces an ammonia molecule by converting glutamine to glutamate. PurL transfers the ammonia molecule to FGAR to form FGAM in an ATP-dependent manner. PurS interacts with PurQ and PurL and is thought to assist in the transfer of the ammonia molecule from PurQ to PurL. The chain is Phosphoribosylformylglycinamidine synthase subunit PurL from Frankia casuarinae (strain DSM 45818 / CECT 9043 / HFP020203 / CcI3).